Here is an 811-residue protein sequence, read N- to C-terminus: MRISLNWLRELVQVDLEPEVLAEKLTLAGFEVEEIEDRRTWAAGVVVGRVLEREQHPNADRLSVCQVEIGQAEPVTIVCGASNVRADIWVAVATLGSYLPCIDLKLKPTKLRGVRSEGMICSLSELGLTKESEGIHIFPEDAGLQAGQPVGPLLGLDDVVLDLTSTANRADALSLIGIAREVRALTAATLTLPEVGTADLSRTTLSWRSLYKVKPGSHYSGTIIEGVTIAPSPEWLQKRLQLAGIRTINNVVDITNYILLEYGQPLHAFDRQKLQAIAGSSDLAIGVRSAQAGETLKTLDDQERTLAEAALVITAGDCPVALAGVMGGADSEVSQETTQLLLEAAWFEPIAVRRSARSQGLRTEASARYERGVNVTELPIATQRAIDLLLQIAGGTVISQTVATTTQTEPEHSITLRLQRINELLGPVQAEDEELKDLGADDIERLLTAIGCHLTLVDDAVWQVRVPPYRYRDLEREIDLIEEVARLYGYDNFGETLPPLGSDEGALSIDESLRRQIRAVCRGVGLTELQHYSLVKPGSDRQVHLANPLLAEYSALRLDLLSGLIDAFQYNWEQGNGPLWGFEIGRIFWREEDGFFEADRMGGILGGDPSRGRWQRGGKEQAIDWYAAKGVLEEIFERFGLTIEFQPDRQDDRFHPGRTASLWLQGDRLGRFGQLHPSLCEGRGLPAEVYAFELDLDVWLDHLDQPERQVPRFQPYSSFPASDRDLAFFVDQSVTVAELERIIRRQGGALLSEVELFDQYCGEHVPENQRSLAFRLTYRASDRTLTEAEVEPVHDQVRQSLVERFRVTLRS.

The tRNA-binding domain occupies 39–151; it reads RTWAAGVVVG…AGLQAGQPVG (113 aa). One can recognise a B5 domain in the interval 409–495; sequence EPEHSITLRL…RLYGYDNFGE (87 aa). Asp-473, Asp-479, Glu-482, and Glu-483 together coordinate Mg(2+). The 94-residue stretch at 717–810 folds into the FDX-ACB domain; sequence SSFPASDRDL…LVERFRVTLR (94 aa).

Belongs to the phenylalanyl-tRNA synthetase beta subunit family. Type 1 subfamily. Tetramer of two alpha and two beta subunits. It depends on Mg(2+) as a cofactor.

It is found in the cytoplasm. The catalysed reaction is tRNA(Phe) + L-phenylalanine + ATP = L-phenylalanyl-tRNA(Phe) + AMP + diphosphate + H(+). The sequence is that of Phenylalanine--tRNA ligase beta subunit from Synechococcus sp. (strain ATCC 27144 / PCC 6301 / SAUG 1402/1) (Anacystis nidulans).